We begin with the raw amino-acid sequence, 115 residues long: U3-lycotoxin-Ls1a (115 aa).

The signal sequence occupies residues M1 to A20. Residues E21 to R44 constitute a propeptide that is removed on maturation. 4 cysteine pairs are disulfide-bonded: C48–C63, C55–C72, C62–C87, and C74–C85.

The protein belongs to the neurotoxin 19 (CSTX) family. 01 subfamily. As to expression, expressed by the venom gland.

It localises to the secreted. The polypeptide is U3-lycotoxin-Ls1a (Lycosa singoriensis (Wolf spider)).